We begin with the raw amino-acid sequence, 698 residues long: MSDQDKHEQLRIGLVSPEQILAWSERILPNGERVGQVTTERTLDYRTYEPVRDGLFCERIFGPKKRGVCACVKPRMMENDKENYNSNFCTQCGVELAIDPRIRRYRMGYIKLACPVVHIWYFKRRPSYIADLLDKTRKELEDPVYCDVCITRPTAKKPTLLRFQGLRPSKYESWAEKIAYYLSWDFGLVQEREIATGGKAIREQLAGLDLQMIIDRSYIEWKEIDEVISILFSEPENLFSNRKIYAQFKEQKLQKLRRRKDLLVRRMRFAKYFLRTNVEPQWMVLCLLPVLPPDLRPMFQLNEGGVITSDLNELYQTVIRRNNNVLQFIETTSAFLIPDLLPDQKKLVQQAVDALLDNSIGTQPVRDSHDRPYKSFSDFIQGKEGRFRENLLGKRVDYSGRSVIVVGPLLSLYQCGLPREIAIELFQAFLIRDLVERQIAPNLRAAKFLIRDRGPIIWNVLKQIMQKHPILLNRAPTLHRLGIQAFIPVLINERAIRLHPLVCAGFNADFDGDQMAVHVPLSMEAQVEARLLMFSHLNLISPTIGDPICVPTQDMLLGLYRSTLQKNQGIYENRYHPNSSKKKIVSPSFYSYDDALKAYEQKQIDLDSPLWLRWGREIDTSIINSVNRELPIEVQYECLGTFYEIYDHFRIRKGRVGEILNKYIRTTVGRIRFNREIEEAIKGLWTYDIRQEMLLFRI.

Zn(2+)-binding residues include C69, C71, C89, and C92. Mg(2+) contacts are provided by D509, D511, and D513.

This sequence belongs to the RNA polymerase beta' chain family. RpoC1 subfamily. In plastids the minimal PEP RNA polymerase catalytic core is composed of four subunits: alpha, beta, beta', and beta''. When a (nuclear-encoded) sigma factor is associated with the core the holoenzyme is formed, which can initiate transcription. Requires Mg(2+) as cofactor. Zn(2+) serves as cofactor.

It localises to the plastid. The protein localises to the chloroplast. It carries out the reaction RNA(n) + a ribonucleoside 5'-triphosphate = RNA(n+1) + diphosphate. DNA-dependent RNA polymerase catalyzes the transcription of DNA into RNA using the four ribonucleoside triphosphates as substrates. The polypeptide is DNA-directed RNA polymerase subunit beta' (Cryptomeria japonica (Japanese cedar)).